The chain runs to 210 residues: MGSVVDAPVVVEGVAENMLGDKKVTVVFVLGGPGSGKGTQCANIVEHFGFTHLSAGDLLRAEIKSGSENGTMIENMIKEGKIVPSEVTIKLLQDAMIKNENDKFLIDGFPRNEENRAAFENVTKISPAFVLFFDCSEEEMERRLLGRNQGRVDDNIETIRKRFKVFVESSLPVIEHYNAKNKVKKIDAAKPISEVFEDVKAIFAPYAKVE.

Position 34 to 39 (34 to 39) interacts with ATP; that stretch reads GSGKGT. Residues 54-83 form an NMP region; it reads SAGDLLRAEIKSGSENGTMIENMIKEGKIV. A ribonucleoside 5'-phosphate contacts are provided by residues Arg60, 81 to 83, and 108 to 111; these read KIV and GFPR. Asn115 is a CMP binding site. An LID region spans residues 146 to 154; that stretch reads GRNQGRVDD. Arg147 is a binding site for ATP. Residues Arg151 and Arg162 each contribute to the a ribonucleoside 5'-phosphate site. Lys190 serves as a coordination point for ATP.

This sequence belongs to the adenylate kinase family. UMP-CMP kinase subfamily. In terms of assembly, monomer. Mg(2+) is required as a cofactor.

The protein resides in the cytoplasm. Its subcellular location is the nucleus. It carries out the reaction UMP + ATP = UDP + ADP. The catalysed reaction is CMP + ATP = CDP + ADP. It catalyses the reaction dCMP + ATP = dCDP + ADP. Functionally, catalyzes the phosphorylation of pyrimidine nucleoside monophosphates at the expense of ATP. Plays an important role in de novo pyrimidine nucleotide biosynthesis. Has preference for UMP and CMP as phosphate acceptors. The sequence is that of UMP-CMP kinase 3 (URA6) from Oryza sativa subsp. japonica (Rice).